We begin with the raw amino-acid sequence, 310 residues long: Ribosomal RNA small subunit methyltransferase H (310 aa).

S-adenosyl-L-methionine contacts are provided by residues 33–35, aspartate 53, phenylalanine 79, aspartate 100, and glutamine 107; that span reads AGH.

This sequence belongs to the methyltransferase superfamily. RsmH family.

Its subcellular location is the cytoplasm. It catalyses the reaction cytidine(1402) in 16S rRNA + S-adenosyl-L-methionine = N(4)-methylcytidine(1402) in 16S rRNA + S-adenosyl-L-homocysteine + H(+). In terms of biological role, specifically methylates the N4 position of cytidine in position 1402 (C1402) of 16S rRNA. This chain is Ribosomal RNA small subunit methyltransferase H, found in Clostridium beijerinckii (strain ATCC 51743 / NCIMB 8052) (Clostridium acetobutylicum).